The primary structure comprises 403 residues: Tyrosine--tRNA ligase (403 aa).

Residues 42–51 carry the 'HIGH' region motif; the sequence is PTAPDLHLGH. The short motif at 226–230 is the 'KMSKS' region element; sequence KMSKS. Lys229 contributes to the ATP binding site. Residues 336–396 form the S4 RNA-binding domain; the sequence is MPISAVLNKA…GKKAFGRVTL (61 aa).

It belongs to the class-I aminoacyl-tRNA synthetase family. TyrS type 2 subfamily. In terms of assembly, homodimer.

It is found in the cytoplasm. It carries out the reaction tRNA(Tyr) + L-tyrosine + ATP = L-tyrosyl-tRNA(Tyr) + AMP + diphosphate + H(+). Catalyzes the attachment of tyrosine to tRNA(Tyr) in a two-step reaction: tyrosine is first activated by ATP to form Tyr-AMP and then transferred to the acceptor end of tRNA(Tyr). This is Tyrosine--tRNA ligase from Pseudomonas syringae pv. syringae (strain B728a).